The chain runs to 277 residues: Large ribosomal subunit protein uL2 (277 aa).

Positions 222–277 (GVAMNPIDHPHGGGEGRTSGGRHPVTPWGKPTKGKKTRTNKSTDKFILLSRHKRKK) are disordered.

It belongs to the universal ribosomal protein uL2 family. Part of the 50S ribosomal subunit. Forms a bridge to the 30S subunit in the 70S ribosome.

Its function is as follows. One of the primary rRNA binding proteins. Required for association of the 30S and 50S subunits to form the 70S ribosome, for tRNA binding and peptide bond formation. It has been suggested to have peptidyltransferase activity; this is somewhat controversial. Makes several contacts with the 16S rRNA in the 70S ribosome. The chain is Large ribosomal subunit protein uL2 from Bradyrhizobium sp. (strain ORS 278).